The sequence spans 214 residues: ATP-dependent Clp protease proteolytic subunit 2 (214 aa).

Ser-110 (nucleophile) is an active-site residue. His-135 is an active-site residue.

The protein belongs to the peptidase S14 family. As to quaternary structure, fourteen ClpP subunits assemble into 2 heptameric rings which stack back to back to give a disk-like structure with a central cavity, resembling the structure of eukaryotic proteasomes.

It localises to the cytoplasm. The catalysed reaction is Hydrolysis of proteins to small peptides in the presence of ATP and magnesium. alpha-casein is the usual test substrate. In the absence of ATP, only oligopeptides shorter than five residues are hydrolyzed (such as succinyl-Leu-Tyr-|-NHMec, and Leu-Tyr-Leu-|-Tyr-Trp, in which cleavage of the -Tyr-|-Leu- and -Tyr-|-Trp bonds also occurs).. In terms of biological role, cleaves peptides in various proteins in a process that requires ATP hydrolysis. Has a chymotrypsin-like activity. Plays a major role in the degradation of misfolded proteins. The protein is ATP-dependent Clp protease proteolytic subunit 2 of Mycobacterium bovis (strain ATCC BAA-935 / AF2122/97).